The following is a 363-amino-acid chain: Carbamoyl phosphate synthase small chain (363 aa).

The tract at residues 1-172 (MTKRILMLED…AFASPGDGKR (172 aa)) is CPSase. L-glutamine contacts are provided by Ser-46, Gly-220, and Gly-222. Positions 172–359 (RVVLVDYGVK…MEMMNGKEEG (188 aa)) constitute a Glutamine amidotransferase type-1 domain. Catalysis depends on Cys-247, which acts as the Nucleophile. L-glutamine contacts are provided by Leu-248, Gln-251, Asn-289, Gly-291, and Tyr-292. Residues His-332 and Glu-334 contribute to the active site.

The protein belongs to the CarA family. As to quaternary structure, composed of two chains; the small (or glutamine) chain promotes the hydrolysis of glutamine to ammonia, which is used by the large (or ammonia) chain to synthesize carbamoyl phosphate. Tetramer of heterodimers (alpha,beta)4.

The enzyme catalyses hydrogencarbonate + L-glutamine + 2 ATP + H2O = carbamoyl phosphate + L-glutamate + 2 ADP + phosphate + 2 H(+). It catalyses the reaction L-glutamine + H2O = L-glutamate + NH4(+). It functions in the pathway amino-acid biosynthesis; L-arginine biosynthesis; carbamoyl phosphate from bicarbonate: step 1/1. The protein operates within pyrimidine metabolism; UMP biosynthesis via de novo pathway; (S)-dihydroorotate from bicarbonate: step 1/3. Small subunit of the glutamine-dependent carbamoyl phosphate synthetase (CPSase). CPSase catalyzes the formation of carbamoyl phosphate from the ammonia moiety of glutamine, carbonate, and phosphate donated by ATP, constituting the first step of 2 biosynthetic pathways, one leading to arginine and/or urea and the other to pyrimidine nucleotides. The small subunit (glutamine amidotransferase) binds and cleaves glutamine to supply the large subunit with the substrate ammonia. The protein is Carbamoyl phosphate synthase small chain of Listeria monocytogenes serotype 4b (strain F2365).